The chain runs to 353 residues: Guanine nucleotide-binding protein subunit beta-5 (353 aa).

7 WD repeats span residues 61–100 (GHGN…KEHA), 103–142 (MPCT…NENM), 151–192 (MHTN…QSFH), 194–236 (HGAD…QAFE), 237–276 (THES…EVAI), 278–320 (SKES…RVSI), and 323–352 (GHEN…LRVW).

This sequence belongs to the WD repeat G protein beta family. Component of a complex composed of RGS9 (isoform RGS9-1), GNB5 and RGS9BP; within this complex, the presence of GNB5 stabilizes both itself and RGS9 and increases RGS9 GTPase-activating protein (GAP) activity. Interacts with RGS7, forming the RGS7-GNB5 complex; within this complex, the presence of GNB5 increases RGS7 GTPase-activating protein (GAP) activity. Interacts with GPR158; promotes the GTPase activator activity of the RGS7-GNB5 complex in absence of glycine, in contrast GTPase activator activity of the RGS7-GNB5 complex is inhibited in presence of glycine. Interacts with RGS6.

It localises to the membrane. In terms of biological role, enhances GTPase-activating protein (GAP) activity of regulator of G protein signaling (RGS) proteins, such as RGS7 and RGS9, hence involved in the termination of the signaling initiated by the G protein coupled receptors (GPCRs) by accelerating the GTP hydrolysis on the G-alpha subunits, thereby promoting their inactivation. Increases RGS7 GTPase-activating protein (GAP) activity, thereby regulating mood and cognition. Increases RGS9 GTPase-activating protein (GAP) activity, hence contributes to the deactivation of G protein signaling initiated by D(2) dopamine receptors. May play an important role in neuronal signaling, including in the parasympathetic, but not sympathetic, control of heart rate. This is Guanine nucleotide-binding protein subunit beta-5 (GNB5) from Oryctolagus cuniculus (Rabbit).